A 512-amino-acid polypeptide reads, in one-letter code: Bifunctional purine biosynthesis protein PurH (512 aa).

The 150-residue stretch at 1–150 folds into the MGS-like domain; that stretch reads MIGEERVVRA…KNFPAVLVLV (150 aa).

It belongs to the PurH family.

It catalyses the reaction (6R)-10-formyltetrahydrofolate + 5-amino-1-(5-phospho-beta-D-ribosyl)imidazole-4-carboxamide = 5-formamido-1-(5-phospho-D-ribosyl)imidazole-4-carboxamide + (6S)-5,6,7,8-tetrahydrofolate. The catalysed reaction is IMP + H2O = 5-formamido-1-(5-phospho-D-ribosyl)imidazole-4-carboxamide. It participates in purine metabolism; IMP biosynthesis via de novo pathway; 5-formamido-1-(5-phospho-D-ribosyl)imidazole-4-carboxamide from 5-amino-1-(5-phospho-D-ribosyl)imidazole-4-carboxamide (10-formyl THF route): step 1/1. Its pathway is purine metabolism; IMP biosynthesis via de novo pathway; IMP from 5-formamido-1-(5-phospho-D-ribosyl)imidazole-4-carboxamide: step 1/1. This chain is Bifunctional purine biosynthesis protein PurH, found in Chloroflexus aurantiacus (strain ATCC 29366 / DSM 635 / J-10-fl).